A 273-amino-acid polypeptide reads, in one-letter code: F-actin-capping protein subunit alpha (273 aa).

Belongs to the F-actin-capping protein alpha subunit family. Heterodimer of an alpha and a beta subunit.

It localises to the cytoplasm. It is found in the cytoskeleton. In terms of biological role, F-actin-capping proteins bind in a Ca(2+)-independent manner to the fast growing ends of actin filaments (barbed end) thereby blocking the exchange of subunits at these ends. Unlike other capping proteins (such as gelsolin and severin), these proteins do not sever actin filaments. The chain is F-actin-capping protein subunit alpha (cap1) from Emericella nidulans (strain FGSC A4 / ATCC 38163 / CBS 112.46 / NRRL 194 / M139) (Aspergillus nidulans).